The chain runs to 111 residues: MKDPYDVIKRHYVTEKAKTLEGLSLGNGEGKKKGSFCKHPKYTFVVSCDATKPLIAQALESIYADKKVKVKSVNTICVKPQPARMFRGKRKGKTAGFKKAVVTFYEGHSIG.

This sequence belongs to the universal ribosomal protein uL23 family. As to quaternary structure, part of the 50S ribosomal subunit. Contacts protein L29, and trigger factor when it is bound to the ribosome.

One of the early assembly proteins it binds 23S rRNA. One of the proteins that surrounds the polypeptide exit tunnel on the outside of the ribosome. Forms the main docking site for trigger factor binding to the ribosome. This chain is Large ribosomal subunit protein uL23, found in Chlamydia caviae (strain ATCC VR-813 / DSM 19441 / 03DC25 / GPIC) (Chlamydophila caviae).